A 105-amino-acid chain; its full sequence is Large ribosomal subunit protein eL30 (105 aa).

It belongs to the eukaryotic ribosomal protein eL30 family.

The sequence is that of Large ribosomal subunit protein eL30 (rpl30e) from Methanococcus vannielii (strain ATCC 35089 / DSM 1224 / JCM 13029 / OCM 148 / SB).